The primary structure comprises 224 residues: DNA mismatch repair protein MutH (224 aa).

It belongs to the MutH family.

The protein localises to the cytoplasm. In terms of biological role, sequence-specific endonuclease that cleaves unmethylated GATC sequences. It is involved in DNA mismatch repair. This chain is DNA mismatch repair protein MutH, found in Histophilus somni (strain 129Pt) (Haemophilus somnus).